Consider the following 274-residue polypeptide: Insulin-like growth factor-binding protein-like 1 (274 aa).

Residues 1-21 (MPRSPGLFLLLLVLQPLPALG) form the signal peptide. The IGFBP N-terminal domain maps to 30–105 (RNPECGPCRP…PEGTGLCVCA (76 aa)). Intrachain disulfides connect Cys34/Cys59, Cys37/Cys61, Cys42/Cys62, Cys48/Cys65, Cys73/Cys87, Cys81/Cys102, and Cys111/Cys147. The Kazal-like domain maps to 91 to 149 (AAGAAPEGTGLCVCAQRGSVCGSDGRSYPSVCALRLRARQAPRALPGHLHKARDGPCEF). In terms of domain architecture, Ig-like C2-type spans 151–255 (PVVITPPQSV…GEAQSHGTVT (105 aa)). Residue Asn162 is glycosylated (N-linked (GlcNAc...) asparagine). Residues Cys172 and Cys239 are joined by a disulfide bond.

The protein resides in the secreted. Its function is as follows. IGF-binding proteins prolong the half-life of IGFs and have been shown to either inhibit or stimulate the growth promoting effects of the IGFs in cell culture. They alter the interaction of IGFs with their cell surface receptors. The chain is Insulin-like growth factor-binding protein-like 1 (IGFBPL1) from Bos taurus (Bovine).